We begin with the raw amino-acid sequence, 485 residues long: Glutamyl-tRNA(Gln) amidotransferase subunit A (485 aa).

Catalysis depends on charge relay system residues lysine 78 and serine 153. Serine 177 functions as the Acyl-ester intermediate in the catalytic mechanism.

This sequence belongs to the amidase family. GatA subfamily. As to quaternary structure, heterotrimer of A, B and C subunits.

It catalyses the reaction L-glutamyl-tRNA(Gln) + L-glutamine + ATP + H2O = L-glutaminyl-tRNA(Gln) + L-glutamate + ADP + phosphate + H(+). Functionally, allows the formation of correctly charged Gln-tRNA(Gln) through the transamidation of misacylated Glu-tRNA(Gln) in organisms which lack glutaminyl-tRNA synthetase. The reaction takes place in the presence of glutamine and ATP through an activated gamma-phospho-Glu-tRNA(Gln). The protein is Glutamyl-tRNA(Gln) amidotransferase subunit A of Bacillus cereus (strain ZK / E33L).